Here is a 304-residue protein sequence, read N- to C-terminus: Non-specific ribonucleoside hydrolase RihC (304 aa).

The active site involves histidine 233.

This sequence belongs to the IUNH family. RihC subfamily.

Its function is as follows. Hydrolyzes both purine and pyrimidine ribonucleosides with a broad-substrate specificity. This chain is Non-specific ribonucleoside hydrolase RihC, found in Escherichia coli (strain 55989 / EAEC).